A 344-amino-acid chain; its full sequence is Dihydroorotate dehydrogenase (quinone) (344 aa).

FMN-binding positions include 61–65 and Thr-85; that span reads AGLDK. Residue Lys-65 participates in substrate binding. 110 to 114 serves as a coordination point for substrate; the sequence is NRMGF. The FMN site is built by Asn-138 and Asn-171. Substrate is bound at residue Asn-171. Ser-174 functions as the Nucleophile in the catalytic mechanism. Residue Asn-176 participates in substrate binding. Residues Lys-216 and Thr-244 each coordinate FMN. Residue 245-246 participates in substrate binding; the sequence is NT. FMN-binding positions include Gly-267, Gly-296, and 317–318; that span reads YS.

Belongs to the dihydroorotate dehydrogenase family. Type 2 subfamily. Monomer. Requires FMN as cofactor.

Its subcellular location is the cell membrane. It carries out the reaction (S)-dihydroorotate + a quinone = orotate + a quinol. The protein operates within pyrimidine metabolism; UMP biosynthesis via de novo pathway; orotate from (S)-dihydroorotate (quinone route): step 1/1. In terms of biological role, catalyzes the conversion of dihydroorotate to orotate with quinone as electron acceptor. The polypeptide is Dihydroorotate dehydrogenase (quinone) (Psychrobacter sp. (strain PRwf-1)).